Here is a 96-residue protein sequence, read N- to C-terminus: Aspartyl/glutamyl-tRNA(Asn/Gln) amidotransferase subunit C (96 aa).

It belongs to the GatC family. In terms of assembly, heterotrimer of A, B and C subunits.

The catalysed reaction is L-glutamyl-tRNA(Gln) + L-glutamine + ATP + H2O = L-glutaminyl-tRNA(Gln) + L-glutamate + ADP + phosphate + H(+). It catalyses the reaction L-aspartyl-tRNA(Asn) + L-glutamine + ATP + H2O = L-asparaginyl-tRNA(Asn) + L-glutamate + ADP + phosphate + 2 H(+). Its function is as follows. Allows the formation of correctly charged Asn-tRNA(Asn) or Gln-tRNA(Gln) through the transamidation of misacylated Asp-tRNA(Asn) or Glu-tRNA(Gln) in organisms which lack either or both of asparaginyl-tRNA or glutaminyl-tRNA synthetases. The reaction takes place in the presence of glutamine and ATP through an activated phospho-Asp-tRNA(Asn) or phospho-Glu-tRNA(Gln). In Bacillus velezensis (strain DSM 23117 / BGSC 10A6 / LMG 26770 / FZB42) (Bacillus amyloliquefaciens subsp. plantarum), this protein is Aspartyl/glutamyl-tRNA(Asn/Gln) amidotransferase subunit C.